The following is a 266-amino-acid chain: MNKPIGVIDSGVGGLTVAKEIIRQLPNETIYYLGDSARCPYGPREGDEVRKFTVQLAQKLMEFDIKMLVIACNTATAVALDTLKELLPIPVIGVIEPGSRTAIMTTKNNNVMVLGTEGTIKSEAYTKHIKAINPHVDVTGVACPDFVPLVEQMRYHDPVPTNIVIHQTLKNYRTNKADTVILGCTHYPLLFEPLHDYFGGSKTVISSGLETAREVSALLTFSNEHAPYTPNTKHRFFATGDTEHIEYIISQWLKIDDVEVTQVKVD.

Residues 9–10 (DS) and 41–42 (YG) contribute to the substrate site. C72 acts as the Proton donor/acceptor in catalysis. 73–74 (NT) contributes to the substrate binding site. C184 serves as the catalytic Proton donor/acceptor. 185 to 186 (TH) is a substrate binding site.

This sequence belongs to the aspartate/glutamate racemases family.

It carries out the reaction L-glutamate = D-glutamate. Its pathway is cell wall biogenesis; peptidoglycan biosynthesis. Its function is as follows. Provides the (R)-glutamate required for cell wall biosynthesis. The protein is Glutamate racemase of Staphylococcus carnosus (strain TM300).